Here is a 229-residue protein sequence, read N- to C-terminus: Uracil-DNA glycosylase (229 aa).

Asp67 (proton acceptor) is an active-site residue.

Belongs to the uracil-DNA glycosylase (UDG) superfamily. UNG family.

Its subcellular location is the cytoplasm. It carries out the reaction Hydrolyzes single-stranded DNA or mismatched double-stranded DNA and polynucleotides, releasing free uracil.. Functionally, excises uracil residues from the DNA which can arise as a result of misincorporation of dUMP residues by DNA polymerase or due to deamination of cytosine. The sequence is that of Uracil-DNA glycosylase from Coxiella burnetii (strain CbuG_Q212) (Coxiella burnetii (strain Q212)).